We begin with the raw amino-acid sequence, 398 residues long: Phosphoglycerate kinase (398 aa).

Substrate contacts are provided by residues 21–23 (DFN), Arg-36, 59–62 (HLGR), Arg-119, and Arg-157. Residues Lys-208, Gly-296, Glu-327, and 354–357 (GGDS) contribute to the ATP site.

This sequence belongs to the phosphoglycerate kinase family. Monomer.

Its subcellular location is the cytoplasm. It catalyses the reaction (2R)-3-phosphoglycerate + ATP = (2R)-3-phospho-glyceroyl phosphate + ADP. Its pathway is carbohydrate degradation; glycolysis; pyruvate from D-glyceraldehyde 3-phosphate: step 2/5. The sequence is that of Phosphoglycerate kinase from Streptococcus mutans serotype c (strain ATCC 700610 / UA159).